Consider the following 247-residue polypeptide: MTLDFALSQDAAVPAFTEEPVNPSPLAVSVRGLQRRYGARVVIDALDLDIREGEFVALLGESGCGKTTLLRALAGLDLPDAGQIRAPERPSVVFQEHRLLPWATLWENVALGHETTVGRAGAARALAEVGLSGREDDWPRNLSGGQAQRVALARGLARDPALLLLDEPFAALDALTRIKMHGLVKELVARHHPGVLLVTHDVDEALTLADRILVMRSGRIAASFQPETHTPQALRSILLEELGVQSL.

The ABC transporter domain maps to 28 to 242 (VSVRGLQRRY…ALRSILLEEL (215 aa)). An ATP-binding site is contributed by 60–67 (GESGCGKT).

Belongs to the ABC transporter superfamily. Aliphatic sulfonates importer (TC 3.A.1.17.2) family. As to quaternary structure, the complex is composed of two ATP-binding proteins (SsuB), two transmembrane proteins (SsuC) and a solute-binding protein (SsuA).

It is found in the cell inner membrane. The enzyme catalyses ATP + H2O + aliphatic sulfonate-[sulfonate-binding protein]Side 1 = ADP + phosphate + aliphatic sulfonateSide 2 + [sulfonate-binding protein]Side 1.. In terms of biological role, part of the ABC transporter complex SsuABC involved in aliphatic sulfonates import. Responsible for energy coupling to the transport system. This Paraburkholderia xenovorans (strain LB400) protein is Aliphatic sulfonates import ATP-binding protein SsuB 3.